A 34-amino-acid polypeptide reads, in one-letter code: Endoglucanase 1 (34 aa).

It carries out the reaction Endohydrolysis of (1-&gt;4)-beta-D-glucosidic linkages in cellulose, lichenin and cereal beta-D-glucans.. This is Endoglucanase 1 from Sclerotinia sclerotiorum (White mold).